Here is a 96-residue protein sequence, read N- to C-terminus: Phosphoribosyl-ATP pyrophosphatase (96 aa).

This sequence belongs to the PRA-PH family.

The protein localises to the cytoplasm. The enzyme catalyses 1-(5-phospho-beta-D-ribosyl)-ATP + H2O = 1-(5-phospho-beta-D-ribosyl)-5'-AMP + diphosphate + H(+). It functions in the pathway amino-acid biosynthesis; L-histidine biosynthesis; L-histidine from 5-phospho-alpha-D-ribose 1-diphosphate: step 2/9. The polypeptide is Phosphoribosyl-ATP pyrophosphatase (Methanococcus aeolicus (strain ATCC BAA-1280 / DSM 17508 / OCM 812 / Nankai-3)).